A 4015-amino-acid polypeptide reads, in one-letter code: Hybrid PKS-NRPS synthetase iccA (4015 aa).

Over residues 1-12 (MAANDSNNQTKP) the composition is skewed to polar residues. A disordered region spans residues 1 to 20 (MAANDSNNQTKPQLPEEPVA). The Ketosynthase family 3 (KS3) domain maps to 16–445 (EEPVAIVGSS…GTNAHVIIES (430 aa)). Catalysis depends on for beta-ketoacyl synthase activity residues C190, H327, and H365. Residues 560-885 (VFTGQGAQWP…LKRGASDVEA (326 aa)) form a malonyl-CoA:ACP transacylase (MAT) domain region. The N-terminal hotdog fold stretch occupies residues 954-1091 (HELLGRRTPD…GRLSVHLGEA (138 aa)). The segment at 954-1260 (HELLGRRTPD…TTKMVGEQDA (307 aa)) is dehydratase (DH) domain. The PKS/mFAS DH domain maps to 954–1261 (HELLGRRTPD…TKMVGEQDAS (308 aa)). Catalysis depends on H986, which acts as the Proton acceptor; for dehydratase activity. Positions 1106-1261 (LVNINTDRAY…TKMVGEQDAS (156 aa)) are C-terminal hotdog fold. The active-site Proton donor; for dehydratase activity is D1165. The segment at 1400 to 1598 (KDDMLNRFYM…YSGADMVVHD (199 aa)) is methyltransferase (MT) domain. Residues 2120–2261 (KTYLMVGAAG…STATTIGNIG (142 aa)) are ketoreductase (KR) domain. The interval 2379 to 2405 (STLQNDSSQTGGTGNGSSVRRQVEEAQ) is disordered. The 80-residue stretch at 2409 to 2488 (EAVDAVLDGF…QICTTAAKKV (80 aa)) folds into the Carrier 1 domain. S2448 bears the O-(pantetheine 4'-phosphoryl)serine mark. Residues 2498 to 2515 (EDAVAEEGGREAASKKEP) are compositionally biased toward basic and acidic residues. Disordered stretches follow at residues 2498–2529 (EDAVAEEGGREAASKKEPAPAASAPTPAPVAP) and 2545–2597 (TISE…VRDE). Positions 2553–2569 (SAFSNKGSSSSATGASS) are enriched in low complexity. A compositionally biased stretch (basic and acidic residues) spans 2582–2597 (TSKDQSHVRPETVRDE). The interval 2598-3029 (RMSPAQARIW…HVKLKDCVIH (432 aa)) is condensation (C) domain. Residues 3063 to 3459 (LKSPKNAAIQ…GTLLCLGRLD (397 aa)) are adenylation (A) (KR) domain. A reductase (RED) domain region spans residues 3063–3459 (LKSPKNAAIQ…GTLLCLGRLD (397 aa)). The 80-residue stretch at 3572–3651 (EKMNIREGEL…EMALCVDEQR (80 aa)) folds into the Carrier 2 domain. At S3611 the chain carries O-(pantetheine 4'-phosphoryl)serine.

The protein in the C-terminal section; belongs to the NRP synthetase family.

The enzyme catalyses L-tyrosine + holo-[ACP] + 7 malonyl-CoA + acetyl-CoA + 8 AH2 + 2 S-adenosyl-L-methionine + ATP + 4 H(+) = N-[(4E,6E,10S,12Z,14E)-6,10-dimethyl-3-oxohexadeca-4,6,12,14-tetraenoyl]-L-tyrosyl-[ACP] + 8 A + AMP + 2 S-adenosyl-L-homocysteine + 7 CO2 + diphosphate + 8 CoA + 6 H2O. Its pathway is mycotoxin biosynthesis. In terms of biological role, hybrid PKS-NRPS synthetase; part of the gene cluster that mediates the biosynthesis of ilicicolin H, a 4-hydroxy-2-pyridonealkaloid that has potent and broad antifungal activities by inhibiting the mitochondrial respiration chain. IccA assembles the backbone of ilicicolin H. The PKS portion and trans-acting enoyl reductase iccB work together to construct an octaketide, and two methyl groups are introduced by the MT domain during the chain assembly. The nascent chain is then condensed with tyrosine, catalyzed by the C domain, and the resulting PKS-NRPS hybrid is offloaded by the RED domain to form an advanced tetramic acid intermediate. The biosynthesis of ilicicolin H starts with formation of the tetramic acid by the hybrid PKS-NRPS synthetase iccA with the partnering trans-enoyl reductase iccB since iccA lacks a designated enoylreductase (ER) domain. The cytochrome P450 monooxygenase iccC then catalyzes the ring expansion of the tetramate to the acyclic 2-pyridone. The pericyclase iccD further converts the acyclic 2-pyridone into 8-epi-ilicicolin H. Finally, the epimerase iccE converts 8-epi-ilicicolin H into ilicicolin H via epimerization. IccA to iccE are sufficient for ilicicolin H biosynthesis and the roles of the remaining enzymes, iccF, iccG and iccH within the pathway have still to be determined. The polypeptide is Hybrid PKS-NRPS synthetase iccA (Talaromyces variabilis (Penicillium variabile)).